A 96-amino-acid chain; its full sequence is C-C motif chemokine 20 (96 aa).

Residues 1–26 form the signal peptide; that stretch reads MACKHLPFLALAGVLLAYLCSQSEAA. 2 disulfides stabilise this stretch: Cys31/Cys58 and Cys32/Cys74.

The protein belongs to the intercrine beta (chemokine CC) family. Low levels in thymus and lung.

Its subcellular location is the secreted. Its function is as follows. Acts as a ligand for C-C chemokine receptor CCR6. Signals through binding and activation of CCR6 and induces a strong chemotactic response and mobilization of intracellular calcium ions. The ligand-receptor pair CCL20-CCR6 is responsible for the chemotaxis of dendritic cells (DC), effector/memory T-cells and B-cells and plays an important role at skin and mucosal surfaces under homeostatic and inflammatory conditions, as well as in pathology, including cancer and autoimmune diseases. CCL20 acts as a chemotactic factor that attracts lymphocytes and, slightly, neutrophils, but not monocytes. Involved in the recruitment of both the pro-inflammatory IL17 producing helper T-cells (Th17) and the regulatory T-cells (Treg) to sites of inflammation. Required for optimal migration of thymic natural regulatory T cells (nTregs) and DN1 early thymocyte progenitor cells. Positively regulates sperm motility and chemotaxis via its binding to CCR6 which triggers Ca2+ mobilization in the sperm which is important for its motility. May be involved in formation and function of the mucosal lymphoid tissues by attracting lymphocytes and dendritic cells towards epithelial cells. This Rattus norvegicus (Rat) protein is C-C motif chemokine 20 (Ccl20).